The chain runs to 419 residues: Putative zinc metalloprotease SPy_1963/M5005_Spy1674 (419 aa).

A Zn(2+)-binding site is contributed by H18. E19 is a catalytic residue. Residue H22 coordinates Zn(2+). The next 4 membrane-spanning stretches (helical) occupy residues 169-191 (LITNFAGPMNNFILGIVVFILLV), 301-323 (LAWSRAFTILNALKGLITGFSLN), 343-365 (LESVLSLMAMLSINLGIFNLIPI), and 392-411 (AYITLAGVAIMVVLMIAVTW). The 100-residue stretch at 175-274 (GPMNNFILGI…LKTVAVKPQK (100 aa)) folds into the PDZ domain.

This sequence belongs to the peptidase M50B family. Zn(2+) is required as a cofactor.

The protein localises to the cell membrane. This Streptococcus pyogenes serotype M1 protein is Putative zinc metalloprotease SPy_1963/M5005_Spy1674.